The following is a 176-amino-acid chain: Xanthine-guanine phosphoribosyltransferase (176 aa).

Residues 51-52 (RG), arginine 88, and 111-119 (DDLVDSGKT) contribute to the 5-phospho-alpha-D-ribose 1-diphosphate site. Arginine 88 is a GMP binding site. Residue aspartate 112 participates in Mg(2+) binding. The guanine site is built by aspartate 115 and isoleucine 158. Xanthine contacts are provided by aspartate 115 and isoleucine 158. GMP-binding positions include 115–119 (DSGKT) and 157–158 (WI).

Belongs to the purine/pyrimidine phosphoribosyltransferase family. XGPT subfamily. In terms of assembly, homotetramer. Requires Mg(2+) as cofactor.

The protein resides in the cell inner membrane. The catalysed reaction is GMP + diphosphate = guanine + 5-phospho-alpha-D-ribose 1-diphosphate. It carries out the reaction XMP + diphosphate = xanthine + 5-phospho-alpha-D-ribose 1-diphosphate. The enzyme catalyses IMP + diphosphate = hypoxanthine + 5-phospho-alpha-D-ribose 1-diphosphate. It participates in purine metabolism; GMP biosynthesis via salvage pathway; GMP from guanine: step 1/1. It functions in the pathway purine metabolism; XMP biosynthesis via salvage pathway; XMP from xanthine: step 1/1. Functionally, purine salvage pathway enzyme that catalyzes the transfer of the ribosyl-5-phosphate group from 5-phospho-alpha-D-ribose 1-diphosphate (PRPP) to the N9 position of the 6-oxopurines guanine and xanthine to form the corresponding ribonucleotides GMP (guanosine 5'-monophosphate) and XMP (xanthosine 5'-monophosphate), with the release of PPi. To a lesser extent, also acts on hypoxanthine. The polypeptide is Xanthine-guanine phosphoribosyltransferase (Roseobacter denitrificans (strain ATCC 33942 / OCh 114) (Erythrobacter sp. (strain OCh 114))).